Reading from the N-terminus, the 229-residue chain is MQIIWLGHGSFRIEIGDQVLLIDPWLTGNPMLAEDQHAAATTGATHILITHGHFDHTADVVALSKSLEAPVVGIYDFMSYFEAKEGLSVVGFNMGGTVTLGDVAVSLVPALHSTSYGPDATAPLGREAGFIIKGERYTVYVSGDTGISAEMDWIGDYYKPDIGILSAGGHFTMDMKGAAYAAKRYFDFKTVIPCHYKTFDLLEQSATDLIDALPDVDVIEPQVMTPIRF.

The protein belongs to the UPF0173 family.

This Roseobacter denitrificans (strain ATCC 33942 / OCh 114) (Erythrobacter sp. (strain OCh 114)) protein is UPF0173 metal-dependent hydrolase RD1_1994.